Reading from the N-terminus, the 318-residue chain is Transaldolase (318 aa).

The Schiff-base intermediate with substrate role is filled by Lys132.

It belongs to the transaldolase family. Type 1 subfamily. Homodimer.

The protein localises to the cytoplasm. It carries out the reaction D-sedoheptulose 7-phosphate + D-glyceraldehyde 3-phosphate = D-erythrose 4-phosphate + beta-D-fructose 6-phosphate. It functions in the pathway carbohydrate degradation; pentose phosphate pathway; D-glyceraldehyde 3-phosphate and beta-D-fructose 6-phosphate from D-ribose 5-phosphate and D-xylulose 5-phosphate (non-oxidative stage): step 2/3. Functionally, transaldolase is important for the balance of metabolites in the pentose-phosphate pathway. This chain is Transaldolase, found in Shewanella pealeana (strain ATCC 700345 / ANG-SQ1).